The primary structure comprises 383 residues: F-box/kelch-repeat protein At1g16250 (383 aa).

The 48-residue stretch at 7–54 (SIIPGLPDDLALRCIAKLSHGYHGVLECVSRGWRDLVRGADYSCYKAR) folds into the F-box domain. Kelch repeat units lie at residues 50 to 103 (CYKA…GFAC), 109 to 165 (CLLV…SVSG), 166 to 214 (KVYV…SYRG), 216 to 263 (FHVL…VMKN), and 318 to 377 (ELYV…CVSL).

The protein is F-box/kelch-repeat protein At1g16250 of Arabidopsis thaliana (Mouse-ear cress).